Reading from the N-terminus, the 252-residue chain is Indole-3-glycerol phosphate synthase (252 aa).

This sequence belongs to the TrpC family.

It carries out the reaction 1-(2-carboxyphenylamino)-1-deoxy-D-ribulose 5-phosphate + H(+) = (1S,2R)-1-C-(indol-3-yl)glycerol 3-phosphate + CO2 + H2O. It functions in the pathway amino-acid biosynthesis; L-tryptophan biosynthesis; L-tryptophan from chorismate: step 4/5. This chain is Indole-3-glycerol phosphate synthase, found in Bacillus licheniformis (strain ATCC 14580 / DSM 13 / JCM 2505 / CCUG 7422 / NBRC 12200 / NCIMB 9375 / NCTC 10341 / NRRL NRS-1264 / Gibson 46).